Consider the following 101-residue polypeptide: Small ribosomal subunit protein uS10 (101 aa).

The protein belongs to the universal ribosomal protein uS10 family. As to quaternary structure, part of the 30S ribosomal subunit.

Its function is as follows. Involved in the binding of tRNA to the ribosomes. This Amoebophilus asiaticus (strain 5a2) protein is Small ribosomal subunit protein uS10.